A 134-amino-acid polypeptide reads, in one-letter code: Cerato-platanin (134 aa).

The N-terminal stretch at 1–14 (MKFSILPMIASAMA) is a signal peptide. The segment at 18–20 (SYD) is binding of oligomers of N-acetylglucosamine (GlcNAc). Binding of N-acetylglucosamine tetramer (GlcNAc-4) regions lie at residues 31 to 43 (SVAC…GLMA), 65 to 68 (GWDS), and 91 to 95 (DSGRG). 2 disulfides stabilise this stretch: C34/C71 and C74/C129. The tract at residues 113–116 (AGRV) is binding of oligomers of N-acetylglucosamine (GlcNAc).

It belongs to the cerato-platanin family. In terms of assembly, monomer.

It localises to the secreted. Its subcellular location is the cell wall. In terms of biological role, phytotoxin which causes production of phytoalexin in platanus acerifolia, platanus occidentalis and platanus orientalis. Induces cell necrosis in tobacco leaves, and in callus cells and leaves of P.acerifolia. Induces reactive oxygen species (ROS) synthesis, nitric oxide (NO) production and mitogen-activated protein kinases (MAPKs) phosphorylation in the leaves of A.thaliana and P.acerifolia. Results in H(2)O(2) production on the epidermis around the stomata, rapid closure of the stomata, reduced photosynthetic and CO(2) assimilation rate, and an increase in a number of volatile organic compound (VOC) emission in A.thaliana leaves. Induces overexpression of genes related to salicylic acid- and ethylene-signaling, camalexin synthesis, ROS production and oxidative stress, and genes of various receptor kinases, and down-regulation of a number of jasmonic acid (JA)-signaling genes in A.thaliana leaves. Renders resistance against C.platani in A.thaliana and P.acerifolia. Renders localised resistance of A.thaliana against infection by virulent foliar pathogens B.cinerea and P.syringae pv. tomato. Binds cellulose analog carboxymethyl cellulose (CMC). Expansin-like protein with probable fungal and plant cell wall loosening activity based on its non-enzymatic cellulose weakening activity in vitro. Increases glucose production by cellulase after pre-incubation of cellulose with this protein. In contrast, according to PubMed:23512479, no synergistic effect with cellulases. May have a structural role in the fungal cell wall based on its ability to bind chitin, but does not bind beta-1,3-glucan. The protein is Cerato-platanin of Ceratocystis fimbriata f. sp. platani.